The following is a 425-amino-acid chain: tRNA(Ile)-lysidine synthase (425 aa).

27–32 (SGGLDS) contributes to the ATP binding site.

Belongs to the tRNA(Ile)-lysidine synthase family.

It localises to the cytoplasm. The catalysed reaction is cytidine(34) in tRNA(Ile2) + L-lysine + ATP = lysidine(34) in tRNA(Ile2) + AMP + diphosphate + H(+). Its function is as follows. Ligates lysine onto the cytidine present at position 34 of the AUA codon-specific tRNA(Ile) that contains the anticodon CAU, in an ATP-dependent manner. Cytidine is converted to lysidine, thus changing the amino acid specificity of the tRNA from methionine to isoleucine. The protein is tRNA(Ile)-lysidine synthase of Streptococcus pneumoniae (strain Hungary19A-6).